Reading from the N-terminus, the 295-residue chain is Probable deoxyhypusine synthase (295 aa).

Lys267 serves as the catalytic Nucleophile.

This sequence belongs to the deoxyhypusine synthase family. Requires NAD(+) as cofactor.

The enzyme catalyses [eIF5A protein]-L-lysine + spermidine = [eIF5A protein]-deoxyhypusine + propane-1,3-diamine. It functions in the pathway protein modification; eIF5A hypusination. Functionally, catalyzes the NAD-dependent oxidative cleavage of spermidine and the subsequent transfer of the butylamine moiety of spermidine to the epsilon-amino group of a specific lysine residue of the eIF-5A precursor protein to form the intermediate deoxyhypusine residue. This is Probable deoxyhypusine synthase from Pyrobaculum calidifontis (strain DSM 21063 / JCM 11548 / VA1).